Here is a 239-residue protein sequence, read N- to C-terminus: Tetraspanin-9 (239 aa).

Topologically, residues M1–M13 are cytoplasmic. A helical transmembrane segment spans residues F14–L34. At S35–N55 the chain is on the extracellular side. Residues L56–I76 traverse the membrane as a helical segment. The Cytoplasmic segment spans residues K77–S85. The helical transmembrane segment at F86–V106 threads the bilayer. Topologically, residues Y107–H203 are extracellular. Residue N180 is glycosylated (N-linked (GlcNAc...) asparagine). Residues V204–M224 form a helical membrane-spanning segment. Residues T225–A239 are Cytoplasmic-facing.

It belongs to the tetraspanin (TM4SF) family. In terms of assembly, found in a complex with GP6. Glycosylated. As to expression, expressed in megakaryocytes and platelets (at protein level).

It localises to the membrane. The polypeptide is Tetraspanin-9 (TSPAN9) (Homo sapiens (Human)).